Consider the following 116-residue polypeptide: Putative pterin-4-alpha-carbinolamine dehydratase (116 aa).

It belongs to the pterin-4-alpha-carbinolamine dehydratase family.

The enzyme catalyses (4aS,6R)-4a-hydroxy-L-erythro-5,6,7,8-tetrahydrobiopterin = (6R)-L-erythro-6,7-dihydrobiopterin + H2O. The polypeptide is Putative pterin-4-alpha-carbinolamine dehydratase (Microcystis aeruginosa (strain NIES-843 / IAM M-2473)).